The sequence spans 312 residues: Nucleosome assembly protein 1-like 4 (312 aa).

A coiled-coil region spans residues 24–78; the sequence is VETLKNKLQALAEQHVDVLESLAPSVRKRVDVLMEIQSQHDELEVKFFEEKAALE. Residues 45 to 60 carry the Nuclear export signal motif; the sequence is LAPSVRKRVDVLMEIQ. The disordered stretch occupies residues 289–312; the sequence is DYGASWVDDEEEDDNNDEYSDEEA.

It belongs to the nucleosome assembly protein (NAP) family.

The protein localises to the nucleus. Its subcellular location is the cytoplasm. In terms of biological role, may modulate chromatin structure by regulation of nucleosome assembly/disassembly. This chain is Nucleosome assembly protein 1-like 4, found in Oryza sativa subsp. japonica (Rice).